Reading from the N-terminus, the 120-residue chain is MVYLQTVNEFFTQSKSLTEAYPKTTKLSIKYRTNEQSQNYLIAKAFESASGICLKYRTDKAAELGRLLLIANKLSYVSTGNEIPPEPEQEVVASPVTEQKKAEPSAPPKGSKKKKRGKKK.

The disordered stretch occupies residues 79-120 (TGNEIPPEPEQEVVASPVTEQKKAEPSAPPKGSKKKKRGKKK). The span at 110 to 120 (GSKKKKRGKKK) shows a compositional bias: basic residues.

This is an uncharacterized protein from Schizosaccharomyces pombe (strain 972 / ATCC 24843) (Fission yeast).